Here is a 138-residue protein sequence, read N- to C-terminus: Cysteine desulfuration protein SufE (138 aa).

The Cysteine persulfide intermediate role is filled by C51.

This sequence belongs to the SufE family. In terms of assembly, homodimer. Interacts with SufS.

It localises to the cytoplasm. It participates in cofactor biosynthesis; iron-sulfur cluster biosynthesis. Functionally, participates in cysteine desulfuration mediated by SufS. Cysteine desulfuration mobilizes sulfur from L-cysteine to yield L-alanine and constitutes an essential step in sulfur metabolism for biosynthesis of a variety of sulfur-containing biomolecules. Functions as a sulfur acceptor for SufS, by mediating the direct transfer of the sulfur atom from the S-sulfanylcysteine of SufS, an intermediate product of cysteine desulfuration process. The sequence is that of Cysteine desulfuration protein SufE from Escherichia coli O45:K1 (strain S88 / ExPEC).